The primary structure comprises 1276 residues: Probable ubiquitin carboxyl-terminal hydrolase K02C4.3 (1276 aa).

Residues 168–762 (TGLYNSGNTC…SAYMLMYVRS (595 aa)) form the USP domain. Cysteine 177 (nucleophile) is an active-site residue. A disordered region spans residues 375-402 (SMDTEAATSSNLPGNSVENHPNPAAPEV). A compositionally biased stretch (polar residues) spans 380–393 (AATSSNLPGNSVEN). Histidine 707 acts as the Proton acceptor in catalysis.

The protein belongs to the peptidase C19 family.

The enzyme catalyses Thiol-dependent hydrolysis of ester, thioester, amide, peptide and isopeptide bonds formed by the C-terminal Gly of ubiquitin (a 76-residue protein attached to proteins as an intracellular targeting signal).. This chain is Probable ubiquitin carboxyl-terminal hydrolase K02C4.3, found in Caenorhabditis elegans.